The following is a 359-amino-acid chain: DNA integrity scanning protein DisA (359 aa).

The DAC domain occupies 7–146 (DDIFRATLAA…GRRYVLDGSA (140 aa)). Residues glycine 74, leucine 92, and 105 to 109 (TRHRT) contribute to the ATP site.

It belongs to the DisA family. Homooctamer. Mg(2+) serves as cofactor.

It catalyses the reaction 2 ATP = 3',3'-c-di-AMP + 2 diphosphate. Functionally, participates in a DNA-damage check-point that is active prior to asymmetric division when DNA is damaged. DisA forms globular foci that rapidly scan along the chromosomes during sporulation, searching for lesions. When a lesion is present, DisA pauses at the lesion site. This triggers a cellular response that culminates in a temporary block in sporulation initiation. Its function is as follows. Also has diadenylate cyclase activity, catalyzing the condensation of 2 ATP molecules into cyclic di-AMP (c-di-AMP). c-di-AMP acts as a signaling molecule that couples DNA integrity with progression of sporulation. The rise in c-di-AMP level generated by DisA while scanning the chromosome, operates as a positive signal that advances sporulation; upon encountering a lesion, the DisA focus arrests at the damaged site and halts c-di-AMP synthesis. This Frankia casuarinae (strain DSM 45818 / CECT 9043 / HFP020203 / CcI3) protein is DNA integrity scanning protein DisA.